The sequence spans 169 residues: MFKKSIITHAPIHWLSDEEREEVAENTLSWLLELGSMTRRFEQHCHQVTVMPYQEGFIEYIEPADEQKCLPYSRRYWLREIVLCGDNVPWLLGRTLVPEETLTGEDRQLVNLRTVPLGRYLFQETTLSRDFIHIGQQNGHWLRRSRFQLSDKPLLLTEVFLPASPVYKQ.

4 residues coordinate substrate: Met37, Arg79, Leu117, and Glu158.

Belongs to the UbiC family. Monomer.

The protein localises to the cytoplasm. The enzyme catalyses chorismate = 4-hydroxybenzoate + pyruvate. Its pathway is cofactor biosynthesis; ubiquinone biosynthesis. Removes the pyruvyl group from chorismate, with concomitant aromatization of the ring, to provide 4-hydroxybenzoate (4HB) for the ubiquinone pathway. The chain is Chorismate pyruvate-lyase from Proteus mirabilis (strain HI4320).